We begin with the raw amino-acid sequence, 335 residues long: UPF0353 protein MT1528 (335 aa).

Transmembrane regions (helical) follow at residues 18 to 38 and 67 to 87; these read WFFLFLFVVAGLVALYILMQL and VPAILLVLSLLLFTIAMAGPT. One can recognise a VWFA domain in the interval 98–294; that stretch reads VVMLVIDVSQ…AELRAVYSSL (197 aa). A helical membrane pass occupies residues 309 to 329; that stretch reads VGWLRLGALALALAALAALLI.

This sequence belongs to the UPF0353 family.

The protein localises to the cell membrane. The chain is UPF0353 protein MT1528 from Mycobacterium tuberculosis (strain CDC 1551 / Oshkosh).